The primary structure comprises 188 residues: Ion-translocating oxidoreductase complex subunit B (188 aa).

The segment at 1–23 (MIEAAVSMSALGLGLGLLLGVAA) is hydrophobic. One can recognise a 4Fe-4S domain in the interval 29–88 (ESPPIVDAIEGILPGTNCGACGYPGCRGLAEAMSEGAAPVTACAPGGRDVALALAAIVET). Positions 46, 49, 54, 71, 113, 116, 119, 123, 143, 146, 149, and 153 each coordinate [4Fe-4S] cluster. 2 consecutive 4Fe-4S ferredoxin-type domains span residues 104 to 133 (TVAF…GANR) and 134 to 163 (QIHT…ARVK).

Belongs to the 4Fe4S bacterial-type ferredoxin family. RnfB subfamily. As to quaternary structure, the complex is composed of six subunits: RnfA, RnfB, RnfC, RnfD, RnfE and RnfG. [4Fe-4S] cluster serves as cofactor.

It localises to the cellular chromatophore membrane. Part of a membrane-bound complex that couples electron transfer with translocation of ions across the membrane. The polypeptide is Ion-translocating oxidoreductase complex subunit B (Cereibacter sphaeroides (strain ATCC 17023 / DSM 158 / JCM 6121 / CCUG 31486 / LMG 2827 / NBRC 12203 / NCIMB 8253 / ATH 2.4.1.) (Rhodobacter sphaeroides)).